A 324-amino-acid chain; its full sequence is Beta-ketoacyl-[acyl-carrier-protein] synthase III (324 aa).

Residues cysteine 112 and histidine 249 contribute to the active site. The ACP-binding stretch occupies residues 250–254; that stretch reads QANRR. The active site involves asparagine 279.

This sequence belongs to the thiolase-like superfamily. FabH family. In terms of assembly, homodimer.

It is found in the cytoplasm. It carries out the reaction malonyl-[ACP] + acetyl-CoA + H(+) = 3-oxobutanoyl-[ACP] + CO2 + CoA. It participates in lipid metabolism; fatty acid biosynthesis. Functionally, catalyzes the condensation reaction of fatty acid synthesis by the addition to an acyl acceptor of two carbons from malonyl-ACP. Catalyzes the first condensation reaction which initiates fatty acid synthesis and may therefore play a role in governing the total rate of fatty acid production. Possesses both acetoacetyl-ACP synthase and acetyl transacylase activities. Its substrate specificity determines the biosynthesis of branched-chain and/or straight-chain of fatty acids. In Streptococcus equi subsp. zooepidemicus (strain H70), this protein is Beta-ketoacyl-[acyl-carrier-protein] synthase III.